The primary structure comprises 362 residues: Adenosine deaminase (362 aa).

Zn(2+)-binding residues include histidine 19 and histidine 21. The substrate site is built by histidine 21, aspartate 23, and glycine 181. Zn(2+) is bound at residue histidine 208. The Proton donor role is filled by glutamate 211. Aspartate 300 is a binding site for Zn(2+).

The protein belongs to the metallo-dependent hydrolases superfamily. Adenosine and AMP deaminases family. Adenosine deaminase subfamily. It depends on Zn(2+) as a cofactor.

The catalysed reaction is adenosine + H2O + H(+) = inosine + NH4(+). It catalyses the reaction 2'-deoxyadenosine + H2O + H(+) = 2'-deoxyinosine + NH4(+). Functionally, catalyzes the hydrolytic deamination of adenosine and 2-deoxyadenosine. The polypeptide is Adenosine deaminase (Mycobacteroides abscessus (strain ATCC 19977 / DSM 44196 / CCUG 20993 / CIP 104536 / JCM 13569 / NCTC 13031 / TMC 1543 / L948) (Mycobacterium abscessus)).